We begin with the raw amino-acid sequence, 602 residues long: MSATLLVPSMTVKAADTIYNNKTGNQDGYDYELWKDTGNTSMTLNAGGTFDCSWSNINNALFRKGKKFDSTQTYQQIGNITFDYGCDYRPNGNSYLCVYGWTVDPLVEYYIVDSWGTWRPPGGTPKGQIQVDGGTYDVYETTRYNAPSIQGDTTFKQYFSVRTSKRTSGTISVSEHFKAWERMGMRCGNFMKPALNIEGYQSSGSASVYKNNMTIGGSSSSSGNQGGNQGGNTGNENAGNNLVTVADADKIQCETMTKSGQYTGNISSPFNGVALYANNDAVKYTQYFASGTHDFTLRGCSNNNKMARVDLKIGGQNKGTFYYGDSYPAEYTIKNVSHGTGNQTIELVVTADDGQWDAYLDYFNNSVEPGCSLVPGAVVVLVALGSSSNTGNNSGTNTQNQKLIALTFDDGPSSTTSQVLDMLEKYNVKATFFLIGQNVNSNTASIVQRQVKMGCELACHSYTHEDMTKMNASQIRNQIDWTASAIKNTAGVDVKFFRPPYISVNNTMYQNIDLPFIQGSMHNDWESSTSASQRVNSVLSSAKDGDIILLHDFQGNSQTVSALPQIIEGLKNQGYTFVTVSELFEMKGVNPNVEYKIWSNVK.

The first 14 residues, 1-14 (MSATLLVPSMTVKA), serve as a signal peptide directing secretion. The region spanning 17–211 (TIYNNKTGNQ…SSGSASVYKN (195 aa)) is the GH11 domain. Glu-108 functions as the Nucleophile in the catalytic mechanism. Catalysis depends on Glu-198, which acts as the Proton donor. The tract at residues 216–240 (GGSSSSSGNQGGNQGGNTGNENAGN) is disordered. Over residues 224 to 233 (NQGGNQGGNT) the composition is skewed to gly residues. The region spanning 249–366 (DKIQCETMTK…DAYLDYFNNS (118 aa)) is the CBM6 domain. In terms of domain architecture, NodB homology spans 402–578 (KLIALTFDDG…GLKNQGYTFV (177 aa)).

It belongs to the glycosyl hydrolase 11 (cellulase G) family. Post-translationally, in the later growth phases, seems to undergo a proteolytic cleavage into a 30 kDa protein possessing xylanolytic activity.

The protein resides in the secreted. It carries out the reaction Endohydrolysis of (1-&gt;4)-beta-D-xylosidic linkages in xylans.. It functions in the pathway glycan degradation; xylan degradation. Endo-acting xylanase which specifically cleaves internal linkages on the xylan backbone, releasing xylooligosaccharides. Is also probably able, via its C-terminal domain, to remove acetyl groups from acetylated xylan, and thus it is probably capable of hydrolyzing acetylated xylan. The sequence is that of Bifunctional xylanase/deacetylase (xyn11A) from Pseudobutyrivibrio xylanivorans.